Reading from the N-terminus, the 116-residue chain is Integration host factor subunit alpha (116 aa).

Disordered regions lie at residues 58–80 (FGNF…GETI) and 94–116 (QKLK…EAAE). Positions 94–105 (QKLKSTVEQSGN) are enriched in polar residues.

It belongs to the bacterial histone-like protein family. In terms of assembly, heterodimer of an alpha and a beta chain.

This protein is one of the two subunits of integration host factor, a specific DNA-binding protein that functions in genetic recombination as well as in transcriptional and translational control. The chain is Integration host factor subunit alpha from Bordetella avium (strain 197N).